A 397-amino-acid polypeptide reads, in one-letter code: MALALVLNSGSSSIKFQLVNPENSAIDEPYVSGLVEQIGEPNGRIVLKVEGEKYTLETPIADHSEGLNLAFDLMDQHNCGPSQLEITAVGHRVVHGGILFSAPELITDEIVEMIRDLIPLAPLHNPANVDGIDVARKILPDVPHVAVFDTGFFHSLPPAAALYAINKDVAAEHGIRRYGFHGTSHEFVSKRVVEILEKPTEEINTITFHLGNGASMAAVQGGRAVDTSMGMTPLAGLVMGTRSGDIDPGIVFHLSRTAGMSIDEIDNLLNKKSGVKGLSGVNDFRELREMIDNNDQDAWSAYNIYIHQLRRYLGSYMVALGRVDTIVFTAGVGENAQFVREDALAGLEMYGIEIDPERNALPNDGPRLISTDASQVKVFVIPTNEELAIARYAVKFA.

Asparagine 8 is a Mg(2+) binding site. Position 15 (lysine 15) interacts with ATP. Residue arginine 92 participates in substrate binding. Aspartate 149 functions as the Proton donor/acceptor in the catalytic mechanism. Residues histidine 209 to glycine 213, aspartate 283 to arginine 285, and glycine 331 to asparagine 335 contribute to the ATP site. Glutamate 385 is a binding site for Mg(2+).

Belongs to the acetokinase family. Homodimer. Mg(2+) is required as a cofactor. Requires Mn(2+) as cofactor.

The protein localises to the cytoplasm. The enzyme catalyses acetate + ATP = acetyl phosphate + ADP. It participates in metabolic intermediate biosynthesis; acetyl-CoA biosynthesis; acetyl-CoA from acetate: step 1/2. Functionally, catalyzes the formation of acetyl phosphate from acetate and ATP. Can also catalyze the reverse reaction. This is Acetate kinase from Corynebacterium glutamicum (strain R).